Here is a 562-residue protein sequence, read N- to C-terminus: Formate--tetrahydrofolate ligase (562 aa).

71–78 lines the ATP pocket; the sequence is TPAGEGKS.

This sequence belongs to the formate--tetrahydrofolate ligase family.

It catalyses the reaction (6S)-5,6,7,8-tetrahydrofolate + formate + ATP = (6R)-10-formyltetrahydrofolate + ADP + phosphate. It functions in the pathway one-carbon metabolism; tetrahydrofolate interconversion. This is Formate--tetrahydrofolate ligase from Bacillus cereus (strain ATCC 14579 / DSM 31 / CCUG 7414 / JCM 2152 / NBRC 15305 / NCIMB 9373 / NCTC 2599 / NRRL B-3711).